Reading from the N-terminus, the 324-residue chain is tRNA dimethylallyltransferase (324 aa).

17 to 24 (GPTASGKT) lines the ATP pocket. 19 to 24 (TASGKT) is a substrate binding site. Interaction with substrate tRNA regions lie at residues 42-45 (DSAL), 166-170 (QRIQR), 251-256 (RCVGYR), and 284-291 (KRQITWLR).

This sequence belongs to the IPP transferase family. Monomer. Mg(2+) is required as a cofactor.

It carries out the reaction adenosine(37) in tRNA + dimethylallyl diphosphate = N(6)-dimethylallyladenosine(37) in tRNA + diphosphate. Its function is as follows. Catalyzes the transfer of a dimethylallyl group onto the adenine at position 37 in tRNAs that read codons beginning with uridine, leading to the formation of N6-(dimethylallyl)adenosine (i(6)A). This chain is tRNA dimethylallyltransferase, found in Burkholderia orbicola (strain AU 1054).